A 355-amino-acid polypeptide reads, in one-letter code: Sorbitol dehydrogenase (355 aa).

Ala-2 carries the post-translational modification N-acetylalanine. Cys-43 is a Zn(2+) binding site. Tyr-49 provides a ligand contact to substrate. Zn(2+) contacts are provided by His-68 and Glu-69. Glu-154 lines the substrate pocket. NAD(+) is bound by residues Ile-182, Asp-202, Arg-207, 271–273 (VGL), and 295–297 (IFR). Residues Arg-297 and Tyr-298 each coordinate substrate.

It belongs to the zinc-containing alcohol dehydrogenase family. As to quaternary structure, homotetramer. It depends on Zn(2+) as a cofactor. As to expression, expressed in liver.

It localises to the mitochondrion membrane. The protein localises to the cell projection. It is found in the cilium. Its subcellular location is the flagellum. The catalysed reaction is keto-D-fructose + NADH + H(+) = D-sorbitol + NAD(+). Polyol dehydrogenase that catalyzes the reversible NAD(+)-dependent oxidation of various sugar alcohols. Is active with D-sorbitol (D-glucitol) as substrate, leading to the C2-oxidized product D-fructose. Is a key enzyme in the polyol pathway that interconverts glucose and fructose via sorbitol, which constitutes an important alternate route for glucose metabolism. The protein is Sorbitol dehydrogenase (SORD) of Gallus gallus (Chicken).